Consider the following 473-residue polypeptide: MTRGRVIQVMGPVVDVKFETGHLPAIYNALKIQHQARNENEVDIDLTLEVALHLGDDTVRTIAMASTDGLIRGMEVIDTGAPISRPVGEVTLGRVFNVLGEPIDLEGDIPADARRDPIHRPAPKFEELATEVEILETGIKVIDLLAPYIKGGKIGLFGGAGVGKTVLIQELIHNIAQEHGGISVFAGFGERTREGNDLYHEMKDSGVISKTGMVFGQMNEPPGPRMRVALTGLTMAEYFRDEQGQDVLLFIDNNFRFTQAGSEVSALLGRMPSAVGYQPTLATEMGQLQERITSTAKGSITSIQAIYVPADDYTDPAPATTFSHLDATTNLERKLAEMGIYPAVDPLASTSRALAPEIVGEEHYQVARKVQQTLQRYKELQDIIAILGMDELSDEDKLVVHRARRIQFFLSQNFHVAEQFTGQPGSYVPVKETVRGFKEILEGKYDHLPEDRFRLVGRIEEVVEKAKAMGVEV.

158–165 (GGAGVGKT) provides a ligand contact to ATP.

The protein belongs to the ATPase alpha/beta chains family. As to quaternary structure, F-type ATPases have 2 components, CF(1) - the catalytic core - and CF(0) - the membrane proton channel. CF(1) has five subunits: alpha(3), beta(3), gamma(1), delta(1), epsilon(1). CF(0) has three main subunits: a(1), b(2) and c(9-12). The alpha and beta chains form an alternating ring which encloses part of the gamma chain. CF(1) is attached to CF(0) by a central stalk formed by the gamma and epsilon chains, while a peripheral stalk is formed by the delta and b chains.

It is found in the cell membrane. The enzyme catalyses ATP + H2O + 4 H(+)(in) = ADP + phosphate + 5 H(+)(out). In terms of biological role, produces ATP from ADP in the presence of a proton gradient across the membrane. The catalytic sites are hosted primarily by the beta subunits. In Geobacillus stearothermophilus (Bacillus stearothermophilus), this protein is ATP synthase subunit beta.